Reading from the N-terminus, the 218-residue chain is Ribose-5-phosphate isomerase A (218 aa).

Residues 28 to 31 (TGST), 81 to 84 (DGAD), and 94 to 97 (KGGG) each bind substrate. The active-site Proton acceptor is the Glu-103. Lys-121 serves as a coordination point for substrate.

This sequence belongs to the ribose 5-phosphate isomerase family. In terms of assembly, homodimer.

It carries out the reaction aldehydo-D-ribose 5-phosphate = D-ribulose 5-phosphate. Its pathway is carbohydrate degradation; pentose phosphate pathway; D-ribose 5-phosphate from D-ribulose 5-phosphate (non-oxidative stage): step 1/1. In terms of biological role, catalyzes the reversible conversion of ribose-5-phosphate to ribulose 5-phosphate. This Psychromonas ingrahamii (strain DSM 17664 / CCUG 51855 / 37) protein is Ribose-5-phosphate isomerase A.